The sequence spans 122 residues: MTSTVEFINRWQRIALLSQSLLELAQRGEWELLLQQEVSYLQSIETVMEKQTPPGITRSIQDMVAGYIKQTLDNEQRLKGLLQQRLDELSGLIGQSTRQKSLNNAYGRLSGMLLVPDAPGAS.

Residues 1-50 (MTSTVEFINRWQRIALLSQSLLELAQRGEWELLLQQEVSYLQSIETVMEK) are required for homodimerization. The tract at residues 60–98 (IQDMVAGYIKQTLDNEQRLKGLLQQRLDELSGLIGQSTR) is fliD binding.

The protein belongs to the FliT family. As to quaternary structure, homodimer. Interacts with FliD and FlhC.

The protein resides in the cytoplasm. Its subcellular location is the cytosol. In terms of biological role, dual-function protein that regulates the transcription of class 2 flagellar operons and that also acts as an export chaperone for the filament-capping protein FliD. As a transcriptional regulator, acts as an anti-FlhDC factor; it directly binds FlhC, thus inhibiting the binding of the FlhC/FlhD complex to class 2 promoters, resulting in decreased expression of class 2 flagellar operons. As a chaperone, effects FliD transition to the membrane by preventing its premature polymerization, and by directing it to the export apparatus. This Salmonella arizonae (strain ATCC BAA-731 / CDC346-86 / RSK2980) protein is Flagellar protein FliT.